We begin with the raw amino-acid sequence, 341 residues long: Biotin synthase (341 aa).

One can recognise a Radical SAM core domain in the interval 40-267 (AEIQVSTLLS…RSMVRLSAGR (228 aa)). [4Fe-4S] cluster is bound by residues Cys55, Cys59, and Cys62. [2Fe-2S] cluster contacts are provided by Cys99, Cys130, Cys190, and Arg262.

This sequence belongs to the radical SAM superfamily. Biotin synthase family. Homodimer. [4Fe-4S] cluster serves as cofactor. Requires [2Fe-2S] cluster as cofactor.

The catalysed reaction is (4R,5S)-dethiobiotin + (sulfur carrier)-SH + 2 reduced [2Fe-2S]-[ferredoxin] + 2 S-adenosyl-L-methionine = (sulfur carrier)-H + biotin + 2 5'-deoxyadenosine + 2 L-methionine + 2 oxidized [2Fe-2S]-[ferredoxin]. It functions in the pathway cofactor biosynthesis; biotin biosynthesis; biotin from 7,8-diaminononanoate: step 2/2. Catalyzes the conversion of dethiobiotin (DTB) to biotin by the insertion of a sulfur atom into dethiobiotin via a radical-based mechanism. The protein is Biotin synthase of Xylella fastidiosa (strain M23).